The following is a 336-amino-acid chain: uncharacterized protein (336 aa).

Positions 1 to 33 are cleaved as a signal peptide; it reads MGSAWPAEIRKIAKISKRLLGATVILGFGVAEA.

This is an uncharacterized protein from Sinorhizobium fredii (strain NBRC 101917 / NGR234).